Consider the following 205-residue polypeptide: CASP-like protein 2A1 (205 aa).

A disordered region spans residues 1-25 (MDKSKVSTAVGGETPVGLITGSRDD). Residues 1 to 34 (MDKSKVSTAVGGETPVGLITGSRDDELESGSMRT) are Cytoplasmic-facing. The helical transmembrane segment at 35 to 55 (AETVLRLVPMAFCISALVLML) threads the bilayer. The Extracellular portion of the chain corresponds to 56–76 (KNSQTNDFGTLSYSDLGAFRY). A helical transmembrane segment spans residues 77-97 (LVHANGICAGYSLLSAIIVAM). Residues 98–105 (PRPSTMSR) lie on the Cytoplasmic side of the membrane. A helical transmembrane segment spans residues 106 to 126 (AWTFFFLDQVLTYVILAAAAV). Residues 127–156 (SVEALYLARKGDIAITWSAACVSFGGFCHK) lie on the Extracellular side of the membrane. A helical transmembrane segment spans residues 157–177 (AITSAVITFIVVVCYALLSLV). The Cytoplasmic portion of the chain corresponds to 178 to 205 (SSYKLFSRYGAPDVSYPGKGIEVAAFHS).

The protein belongs to the Casparian strip membrane proteins (CASP) family. In terms of assembly, homodimer and heterodimers.

It localises to the cell membrane. In Ricinus communis (Castor bean), this protein is CASP-like protein 2A1.